Reading from the N-terminus, the 116-residue chain is Fluoride-specific ion channel FluC 1 (116 aa).

Transmembrane regions (helical) follow at residues 2–22 (LVLV…RYGI), 33–53 (PLPI…GWIL), 63–83 (IFLG…INEL), and 96–116 (WEYF…GTLI). Residues glycine 71 and threonine 74 each contribute to the Na(+) site.

This sequence belongs to the fluoride channel Fluc/FEX (TC 1.A.43) family.

The protein resides in the cell membrane. The catalysed reaction is fluoride(in) = fluoride(out). Na(+) is not transported, but it plays an essential structural role and its presence is essential for fluoride channel function. Functionally, fluoride-specific ion channel. Important for reducing fluoride concentration in the cell, thus reducing its toxicity. The sequence is that of Fluoride-specific ion channel FluC 1 from Lactiplantibacillus plantarum (strain ATCC BAA-793 / NCIMB 8826 / WCFS1) (Lactobacillus plantarum).